The primary structure comprises 931 residues: Isoleucine--tRNA ligase (931 aa).

Residues 57–67 (PFANGNIHMGH) carry the 'HIGH' region motif. Glutamate 556 contacts L-isoleucyl-5'-AMP. The 'KMSKS' region motif lies at 597-601 (KMSKS). Lysine 600 is an ATP binding site. 4 residues coordinate Zn(2+): cysteine 890, cysteine 893, cysteine 910, and cysteine 913.

This sequence belongs to the class-I aminoacyl-tRNA synthetase family. IleS type 1 subfamily. In terms of assembly, monomer. Zn(2+) is required as a cofactor.

It localises to the cytoplasm. The enzyme catalyses tRNA(Ile) + L-isoleucine + ATP = L-isoleucyl-tRNA(Ile) + AMP + diphosphate. Catalyzes the attachment of isoleucine to tRNA(Ile). As IleRS can inadvertently accommodate and process structurally similar amino acids such as valine, to avoid such errors it has two additional distinct tRNA(Ile)-dependent editing activities. One activity is designated as 'pretransfer' editing and involves the hydrolysis of activated Val-AMP. The other activity is designated 'posttransfer' editing and involves deacylation of mischarged Val-tRNA(Ile). The protein is Isoleucine--tRNA ligase of Lactobacillus delbrueckii subsp. bulgaricus (strain ATCC 11842 / DSM 20081 / BCRC 10696 / JCM 1002 / NBRC 13953 / NCIMB 11778 / NCTC 12712 / WDCM 00102 / Lb 14).